The sequence spans 187 residues: MQNSNSFPDWHGTTILAVRKNGSTVIAGDGQVSMGPTVVKGNARKVRRLAGGKVVAGFAGATADAFTLIERLEAKLEQYPDQLARACVDLAKDWRTDRYLRRLEAMLLVADADSIFTVTGVGDVLEPGESTGGGSVAAIGSGGNYALAAAKALIDQDLTAEEIARKAMGIAAEICVYTNGNLTVESL.

T13 is an active-site residue. Residues A172, C175, and T178 each coordinate Na(+).

It belongs to the peptidase T1B family. HslV subfamily. As to quaternary structure, a double ring-shaped homohexamer of HslV is capped on each side by a ring-shaped HslU homohexamer. The assembly of the HslU/HslV complex is dependent on binding of ATP.

The protein resides in the cytoplasm. It carries out the reaction ATP-dependent cleavage of peptide bonds with broad specificity.. Allosterically activated by HslU binding. Protease subunit of a proteasome-like degradation complex believed to be a general protein degrading machinery. This is ATP-dependent protease subunit HslV from Caulobacter sp. (strain K31).